A 143-amino-acid chain; its full sequence is Putative pre-16S rRNA nuclease (143 aa).

It belongs to the YqgF nuclease family.

The protein localises to the cytoplasm. Functionally, could be a nuclease involved in processing of the 5'-end of pre-16S rRNA. This chain is Putative pre-16S rRNA nuclease, found in Lactococcus lactis subsp. cremoris (strain SK11).